We begin with the raw amino-acid sequence, 869 residues long: Synaptonemal complex protein ZEP1 (869 aa).

Coiled-coil stretches lie at residues 64-298, 330-614, and 641-713; these read TDLE…SGFT, HEEK…SERY, and RAYH…WKVM. The segment at 841–869 is disordered; that stretch reads GSHPHPANIGELFSEGSLNPYAEDPYAFG.

As to quaternary structure, interacts with CRC1. In terms of tissue distribution, highly expressed in panicles.

It localises to the nucleus. The protein resides in the chromosome. Required for chromosome synapsis and regulates crossover frequency during meiosis. Acts as a transverse filament protein and constitutes the central element of the synaptonemal complex. The polypeptide is Synaptonemal complex protein ZEP1 (ZEP1) (Oryza sativa subsp. japonica (Rice)).